The primary structure comprises 350 residues: Chorismate synthase (350 aa).

Arg48 provides a ligand contact to NADP(+). FMN is bound by residues 125 to 127 (RSS), Gly277, 292 to 296 (KPIPS), and Arg318.

Belongs to the chorismate synthase family. Homotetramer. It depends on FMNH2 as a cofactor.

It carries out the reaction 5-O-(1-carboxyvinyl)-3-phosphoshikimate = chorismate + phosphate. Its pathway is metabolic intermediate biosynthesis; chorismate biosynthesis; chorismate from D-erythrose 4-phosphate and phosphoenolpyruvate: step 7/7. Its function is as follows. Catalyzes the anti-1,4-elimination of the C-3 phosphate and the C-6 proR hydrogen from 5-enolpyruvylshikimate-3-phosphate (EPSP) to yield chorismate, which is the branch point compound that serves as the starting substrate for the three terminal pathways of aromatic amino acid biosynthesis. This reaction introduces a second double bond into the aromatic ring system. The polypeptide is Chorismate synthase (Maridesulfovibrio salexigens (strain ATCC 14822 / DSM 2638 / NCIMB 8403 / VKM B-1763) (Desulfovibrio salexigens)).